Reading from the N-terminus, the 481-residue chain is Innexin inx6 (481 aa).

The Cytoplasmic portion of the chain corresponds to 1-21; that stretch reads MYAAVKPLSNYLRLKTVRIYD. The chain crosses the membrane as a helical span at residues 22-42; the sequence is PIFTLHSKCTIVILLTCTFLL. Over 43–144 the chain is Extracellular; the sequence is SAKQYFGEPI…VTKRMYLRYY (102 aa). Residues 145–165 form a helical membrane-spanning segment; sequence QWVFMILLFQSLLFYFPSFLW. Residues 166-220 are Cytoplasmic-facing; sequence KVWEGQRMEQLCCEVGDALIVEATYRTRLQMLTRYFRAQFAPIHWCYSIKYAFCE. A helical transmembrane segment spans residues 221 to 241; that stretch reads LLNVFISILNFWLMDVVFNGF. Residues 242 to 302 lie on the Extracellular side of the membrane; the sequence is WYKYIHALAA…VLPLNILNEK (61 aa). A helical membrane pass occupies residues 303–323; the sequence is IFAVLYVWFLFIALLAIMNIL. The Cytoplasmic segment spans residues 324 to 481; that stretch reads YRLLVICCPE…MDRFFHESHA (158 aa).

This sequence belongs to the pannexin family. Uniform expression in the imaginal wing disk. Expressed in an outer layer of the pupal developing CNS. Also expressed in pupal retina: cone cells and primary pigment cells.

The protein resides in the cell membrane. The protein localises to the cell junction. It is found in the gap junction. Functionally, structural components of the gap junctions. This chain is Innexin inx6 (Inx6), found in Drosophila melanogaster (Fruit fly).